A 330-amino-acid polypeptide reads, in one-letter code: B-cell receptor CD22 (330 aa).

The first 17 residues, 1 to 17, serve as a signal peptide directing secretion; that stretch reads MHLLGPWLLLLEYLAFS. The Ig-like V-type domain maps to 18–136; sequence DSSKWAFEHP…MERIHLNVSE (119 aa). The Extracellular portion of the chain corresponds to 18–330; the sequence is DSSKWAFEHP…VFLQVQYAPE (313 aa). 3 disulfide bridges follow: C37/C165, C42/C100, and C159/C217. N65, N99, and N110 each carry an N-linked (GlcNAc...) asparagine glycan. R118 contacts N-acetylneuraminate. N133, N162, N187, and N229 each carry an N-linked (GlcNAc...) asparagine glycan. Ig-like C2-type domains are found at residues 141 to 233 and 240 to 324; these read PHIQ…DTVQ and PKLK…VFLQ. C263 and C307 are disulfide-bonded.

The protein belongs to the immunoglobulin superfamily. SIGLEC (sialic acid binding Ig-like lectin) family. Predominantly monomer of isoform CD22-beta. Also found as heterodimer of isoform CD22-beta and a shorter isoform. Interacts with PTPN6/SHP-1, LYN, SYK, PIK3R1/PIK3R2 and PLCG1 upon phosphorylation. Interacts with GRB2, INPP5D and SHC1 upon phosphorylation. May form a complex with INPP5D/SHIP, GRB2 and SHC1.

Its subcellular location is the cell membrane. Most highly expressed siglec (sialic acid-binding immunoglobulin-like lectin) on B-cells that plays a role in various aspects of B-cell biology including differentiation, antigen presentation, and trafficking to bone marrow. Binds to alpha 2,6-linked sialic acid residues of surface molecules such as CD22 itself, CD45 and IgM in a cis configuration. Can also bind to ligands on other cells as an adhesion molecule in a trans configuration. Acts as an inhibitory coreceptor on the surface of B-cells and inhibits B-cell receptor induced signaling, characterized by inhibition of the calcium mobilization and cellular activation. Mechanistically, the immunoreceptor tyrosine-based inhibitory motif domain is phosphorylated by the Src kinase LYN, which in turn leads to the recruitment of the protein tyrosine phosphatase 1/PTPN6, leading to the negative regulation of BCR signaling. If this negative signaling from is of sufficient strength, apoptosis of the B-cell can be induced. The protein is B-cell receptor CD22 of Pongo pygmaeus (Bornean orangutan).